The chain runs to 179 residues: Large ribosomal subunit protein uL5 (179 aa).

The protein belongs to the universal ribosomal protein uL5 family. As to quaternary structure, part of the 50S ribosomal subunit; part of the 5S rRNA/L5/L18/L25 subcomplex. Contacts the 5S rRNA and the P site tRNA. Forms a bridge to the 30S subunit in the 70S ribosome.

This is one of the proteins that bind and probably mediate the attachment of the 5S RNA into the large ribosomal subunit, where it forms part of the central protuberance. In the 70S ribosome it contacts protein S13 of the 30S subunit (bridge B1b), connecting the 2 subunits; this bridge is implicated in subunit movement. Contacts the P site tRNA; the 5S rRNA and some of its associated proteins might help stabilize positioning of ribosome-bound tRNAs. This is Large ribosomal subunit protein uL5 from Desulfitobacterium hafniense (strain Y51).